A 405-amino-acid polypeptide reads, in one-letter code: Threonine synthase (405 aa).

Position 104 is an N6-(pyridoxal phosphate)lysine (K104). Residues N130, 231-235, and T369 contribute to the pyridoxal 5'-phosphate site; that span reads GNAGN.

This sequence belongs to the threonine synthase family. Homotrimer. The cofactor is pyridoxal 5'-phosphate.

The enzyme catalyses O-phospho-L-homoserine + H2O = L-threonine + phosphate. Its pathway is amino-acid biosynthesis; L-threonine biosynthesis; L-threonine from L-aspartate: step 5/5. Its function is as follows. Catalyzes the gamma-elimination of phosphate from L-phosphohomoserine and the beta-addition of water to produce L-threonine. Does not catalyze the conversion of O-acetyl-L-homoserine into threonine. The protein is Threonine synthase (thrC) of Methanosarcina acetivorans (strain ATCC 35395 / DSM 2834 / JCM 12185 / C2A).